Here is a 598-residue protein sequence, read N- to C-terminus: NADH-ubiquinone oxidoreductase chain 5 (598 aa).

The next 16 helical transmembrane spans lie at 1–21, 28–48, 81–101, 115–135, 171–191, 193–213, 233–253, 265–285, 293–312, 323–343, 362–382, 399–421, 454–474, 480–500, 509–529, and 576–596; these read MLEL…IFLF, FAES…ILLM, CFFV…FYYM, GLFL…QLLI, GDIG…DWSF, GLYA…LAAA, TPVS…FLLI, IQLM…ICAL, VVAF…VGAG, MHAF…HGLQ, SVCF…AGFF, WAVG…LLYF, VIAG…CLSL, LAAV…VNLL, IPEL…HKLI, and LIKM…GIMI.

The protein belongs to the complex I subunit 5 family.

It is found in the mitochondrion inner membrane. The catalysed reaction is a ubiquinone + NADH + 5 H(+)(in) = a ubiquinol + NAD(+) + 4 H(+)(out). Its function is as follows. Core subunit of the mitochondrial membrane respiratory chain NADH dehydrogenase (Complex I) that is believed to belong to the minimal assembly required for catalysis. Complex I functions in the transfer of electrons from NADH to the respiratory chain. The immediate electron acceptor for the enzyme is believed to be ubiquinone. In Branchiostoma lanceolatum (Common lancelet), this protein is NADH-ubiquinone oxidoreductase chain 5 (ND5).